We begin with the raw amino-acid sequence, 206 residues long: RNA-binding protein with multiple splicing 2 (206 aa).

Serine 2 bears the N-acetylserine mark. An RRM domain is found at 25-102 (RTLFVSGLPV…QTLRLEFAKA (78 aa)). The interval 35-45 (DIKPRELYLLF) is important for homodimerization.

As to quaternary structure, homodimer. Interacts with EEF2.

Its subcellular location is the cytoplasm. The protein resides in the nucleus. It localises to the stress granule. RNA-binding protein involved in the regulation of smooth muscle cell differentiation and proliferation in the gastrointestinal system. Binds NOG mRNA, the major inhibitor of the bone morphogenetic protein (BMP) pathway. Mediates an increase of NOG mRNA levels, thereby contributing to the negative regulation of BMP signaling pathway and promoting reversible dedifferentiation and proliferation of smooth muscle cells. Acts as a pre-mRNA alternative splicing regulator. Mediates ACTN1 and FLNB alternative splicing. Likely binds to mRNA tandem CAC trinucleotide or CA dinucleotide motifs. This is RNA-binding protein with multiple splicing 2 (Rbpms2) from Mus musculus (Mouse).